The primary structure comprises 159 residues: Cyclic pyranopterin monophosphate synthase (159 aa).

Residues 75 to 77 (LCH) and 113 to 114 (ME) contribute to the substrate site. The active site involves Asp128.

This sequence belongs to the MoaC family. In terms of assembly, homohexamer; trimer of dimers.

The enzyme catalyses (8S)-3',8-cyclo-7,8-dihydroguanosine 5'-triphosphate = cyclic pyranopterin phosphate + diphosphate. The protein operates within cofactor biosynthesis; molybdopterin biosynthesis. Its function is as follows. Catalyzes the conversion of (8S)-3',8-cyclo-7,8-dihydroguanosine 5'-triphosphate to cyclic pyranopterin monophosphate (cPMP). The sequence is that of Cyclic pyranopterin monophosphate synthase from Cereibacter sphaeroides (strain ATCC 17023 / DSM 158 / JCM 6121 / CCUG 31486 / LMG 2827 / NBRC 12203 / NCIMB 8253 / ATH 2.4.1.) (Rhodobacter sphaeroides).